We begin with the raw amino-acid sequence, 318 residues long: NADH-ubiquinone oxidoreductase chain 1 (318 aa).

A run of 8 helical transmembrane segments spans residues 2–22 (FLMN…FLTL), 70–90 (MFIL…IPMP), 100–120 (LGVL…LWSG), 136–156 (VAQT…IMML), 171–191 (HLWL…STLA), 231–251 (IIMM…NPLF), 253–273 (ELFT…FLWV), and 294–314 (LPLT…LAGI).

Belongs to the complex I subunit 1 family.

Its subcellular location is the mitochondrion inner membrane. It catalyses the reaction a ubiquinone + NADH + 5 H(+)(in) = a ubiquinol + NAD(+) + 4 H(+)(out). Its function is as follows. Core subunit of the mitochondrial membrane respiratory chain NADH dehydrogenase (Complex I) that is believed to belong to the minimal assembly required for catalysis. Complex I functions in the transfer of electrons from NADH to the respiratory chain. The immediate electron acceptor for the enzyme is believed to be ubiquinone. This chain is NADH-ubiquinone oxidoreductase chain 1 (MT-ND1), found in Priodontes maximus (Giant armadillo).